Consider the following 707-residue polypeptide: B-cell lymphoma 6 protein homolog (707 aa).

A BTB domain is found at 32–99 (TDVVIVVSRE…MYTSRLNLRE (68 aa)). The segment at 275-350 (HYSVPEGPKP…QPNSPTESCS (76 aa)) is disordered. Basic and acidic residues predominate over residues 299-315 (KASKEEERPSSEDEIAL). The span at 331-350 (SPQSPQKSDCQPNSPTESCS) shows a compositional bias: polar residues. S334 is modified (phosphoserine). Phosphoserine; by MAPK1 is present on S344. At S362 the chain carries Phosphoserine. The required for interaction with NuRD complex and for transcriptional repressor activity stretch occupies residues 377-380 (KKYK). K380 is modified (N6-acetyllysine; by EP300). S405 carries the phosphoserine modification. The disordered stretch occupies residues 405–469 (SPRAYPAPPA…RSSSESHSPL (65 aa)). Positions 409 to 420 (YPAPPACQPPME) are enriched in pro residues. The segment covering 425 to 452 (DLQSPTKLSASGEDSTIPQASRLNNLVN) has biased composition (polar residues). Positions 458–467 (SPRSSSESHS) are enriched in low complexity. 6 C2H2-type zinc fingers span residues 519–542 (FFCN…LQTH), 547–569 (YKCD…KTVH), 575–597 (YRCN…TRIH), 603–625 (YKCE…VLIH), 631–653 (YPCE…LRIH), and 659–682 (YHCE…RQKH).

Homodimer. Interacts (via BTB domain) with the corepressors BCOR, NCOR1 and SMRT/NCOR2; the interactions are direct. Forms preferably ternary complexes with BCOR and SMRT/NCOR2 on target gene promoters but, on enhancer elements, interacts with SMRT/NCOR2 and HDAC3 to repress proximal gene expression. Interacts with histone deacetylases HDAC2, HDAC5 and HDAC9 (via the catalytic domain). Interacts with ZBTB7 and BCL6B. Interacts with SCF(FBXO11) complex; the interaction is independent of phosphorylation and promotes ubiquitination. Interacts (when phosphorylated) with PIN1; the interaction is required for BCL6 degradation upon genotoxic stress. Interacts with ZBTB17; inhibits ZBTB17 transcriptional activity. Interacts with CTBP1, autoinhibits its transcriptional expression. Interacts with NOTCH1 NCID and SIRT1; leads to a epigenetic repression of selective NOTCH1-target genes. Interacts (nor via BTB domain neither acetylated) with the NuRD complex components CHD4, HDAC1, MBD3 and MTA3; the interaction with MTA3 inhibits BCL6 acetylation and is required for BCL6 transpriptional repression. Post-translationally, phosphorylated by MAPK1 in response to antigen receptor activation at Ser-334 and Ser-344. Phosphorylated by ATM in response to genotoxic stress. Phosphorylation induces its degradation by ubiquitin/proteasome pathway. Polyubiquitinated. Polyubiquitinated by SCF(FBXO11), leading to its degradation by the proteasome. Ubiquitinated by the SCF(FBXL17) complex, leading to its degradation by the proteasome: ubiquitination by the SCF(FBXL17) complex takes place when aberrant BTB domain dimers are formed. In terms of processing, acetylated at Lys-380 by EP300 which inhibits the interaction with NuRD complex and the transcriptional repressor function. Deacetylated by HDAC- and SIR2-dependent pathways. As to expression, expressed at least in germinal center B-cells of spleen.

The protein localises to the nucleus. Its function is as follows. Transcriptional repressor mainly required for germinal center (GC) formation and antibody affinity maturation which has different mechanisms of action specific to the lineage and biological functions. Forms complexes with different corepressors and histone deacetylases to repress the transcriptional expression of different subsets of target genes. Represses its target genes by binding directly to the DNA sequence 5'-TTCCTAGAA-3' (BCL6-binding site) or indirectly by repressing the transcriptional activity of transcription factors. In GC B-cells, represses genes that function in differentiation, inflammation, apoptosis and cell cycle control, also autoregulates its transcriptional expression and up-regulates, indirectly, the expression of some genes important for GC reactions, such as AICDA, through the repression of microRNAs expression, like miR155. An important function is to allow GC B-cells to proliferate very rapidly in response to T-cell dependent antigens and tolerate the physiological DNA breaks required for immunglobulin class switch recombination and somatic hypermutation without inducing a p53/TP53-dependent apoptotic response. In follicular helper CD4(+) T-cells (T(FH) cells), promotes the expression of T(FH)-related genes but inhibits the differentiation of T(H)1, T(H)2 and T(H)17 cells. Also required for the establishment and maintenance of immunological memory for both T- and B-cells. Suppresses macrophage proliferation through competition with STAT5 for STAT-binding motifs binding on certain target genes, such as CCL2 and CCND2. In response to genotoxic stress, controls cell cycle arrest in GC B-cells in both p53/TP53-dependedent and -independent manners. Besides, also controls neurogenesis through the alteration of the composition of NOTCH-dependent transcriptional complexes at selective NOTCH targets, such as HES5, including the recruitment of the deacetylase SIRT1 and resulting in an epigenetic silencing leading to neuronal differentiation. The protein is B-cell lymphoma 6 protein homolog (Bcl6) of Mus musculus (Mouse).